The following is a 149-amino-acid chain: Major outer capsid protein (149 aa).

As to quaternary structure, homotrimer.

It is found in the virion. Assembles to form an icosahedral capsid with a T=13 symmetry. Drives the penetration of the inner capsid (core) into the cytoplasm. This Pseudomonas phage phi6 (Bacteriophage phi-6) protein is Major outer capsid protein (P8).